Here is a 260-residue protein sequence, read N- to C-terminus: DNA repair protein RecO (260 aa).

Belongs to the RecO family.

Involved in DNA repair and RecF pathway recombination. The sequence is that of DNA repair protein RecO from Streptococcus gordonii (strain Challis / ATCC 35105 / BCRC 15272 / CH1 / DL1 / V288).